The primary structure comprises 393 residues: Fractalkine (393 aa).

A signal peptide spans 1 to 24 (MAPSQLAWLLRLAAFFHLCTLLAG). Positions 25-100 (QHLGMTKCNI…HQTAALTRNG (76 aa)) are chemokine and involved in interaction with ITGAV:ITGB3 and ITGA4:ITGB1. Over 25 to 337 (QHLGMTKCNI…PDSQAATRRQ (313 aa)) the chain is Extracellular. 2 disulfide bridges follow: Cys-32-Cys-58 and Cys-36-Cys-74. An N-linked (GlcNAc...) asparagine glycan is attached at Asn-33. The tract at residues 101-337 (GKFEKRVDNV…PDSQAATRRQ (237 aa)) is mucin-like stalk. Disordered regions lie at residues 114–184 (ITSA…PQST) and 213–303 (EKAT…SGSQ). 2 stretches are compositionally biased toward polar residues: residues 153–172 (GTSQ…TSKA) and 223–240 (ALST…NVGS). Residues 338–358 (AVGLLAFLGLLFCLGVAMFAY) form a helical membrane-spanning segment. Over 359 to 393 (QSLQGCPRKMAGEMVEGLRYVPRSCGSNSYVLVPV) the chain is Cytoplasmic.

Belongs to the intercrine delta family. Monomer. Forms a ternary complex with CX3CR1 and ITGAV:ITGB3 or ITGA4:ITGB1. A soluble short form may be released by proteolytic cleavage from the long membrane-anchored form. Highest levels in brain (neurons). Significant levels in kidney, heart, lung and adrenal gland.

The protein resides in the cell membrane. The protein localises to the secreted. In terms of biological role, chemokine that acts as a ligand for both CX3CR1 and integrins ITGAV:ITGB3 and ITGA4:ITGB1. The CX3CR1-CX3CL1 signaling exerts distinct functions in different tissue compartments, such as immune response, inflammation, cell adhesion and chemotaxis. Regulates leukocyte adhesion and migration processes at the endothelium. Can activate integrins in both a CX3CR1-dependent and CX3CR1-independent manner. In the presence of CX3CR1, activates integrins by binding to the classical ligand-binding site (site 1) in integrins. In the absence of CX3CR1, binds to a second site (site 2) in integrins which is distinct from site 1 and enhances the binding of other integrin ligands to site 1. Its function is as follows. The soluble form is chemotactic for T-cells and monocytes, but not for neutrophils. The membrane-bound form promotes adhesion of those leukocytes to endothelial cells. In Rattus norvegicus (Rat), this protein is Fractalkine (Cx3cl1).